The sequence spans 90 residues: Cell division topological specificity factor (90 aa).

It belongs to the MinE family.

In terms of biological role, prevents the cell division inhibition by proteins MinC and MinD at internal division sites while permitting inhibition at polar sites. This ensures cell division at the proper site by restricting the formation of a division septum at the midpoint of the long axis of the cell. In Brucella abortus (strain S19), this protein is Cell division topological specificity factor.